The chain runs to 212 residues: Methylthioribulose-1-phosphate dehydratase (212 aa).

Histidine 103 and histidine 105 together coordinate Zn(2+).

The protein belongs to the aldolase class II family. MtnB subfamily. It depends on Zn(2+) as a cofactor.

The catalysed reaction is 5-(methylsulfanyl)-D-ribulose 1-phosphate = 5-methylsulfanyl-2,3-dioxopentyl phosphate + H2O. It functions in the pathway amino-acid biosynthesis; L-methionine biosynthesis via salvage pathway; L-methionine from S-methyl-5-thio-alpha-D-ribose 1-phosphate: step 2/6. In terms of biological role, catalyzes the dehydration of methylthioribulose-1-phosphate (MTRu-1-P) into 2,3-diketo-5-methylthiopentyl-1-phosphate (DK-MTP-1-P). The sequence is that of Methylthioribulose-1-phosphate dehydratase from Sorangium cellulosum (strain So ce56) (Polyangium cellulosum (strain So ce56)).